The chain runs to 1001 residues: Ulvan lyase, long isoform (1001 aa).

The first 21 residues, 1-21 (MNGLKMLLFSTTLLTAFTLHA), serve as a signal peptide directing secretion. 126–127 (SH) is a binding site for substrate. Residue histidine 127 is the Proton donor/acceptor of the active site. Ca(2+)-binding residues include aspartate 189, aspartate 199, and lysine 201. The substrate site is built by tyrosine 280 and arginine 297. Ca(2+) is bound by residues aspartate 300, aspartate 303, and tyrosine 305. Tyrosine 361 is a substrate binding site.

The protein belongs to the polysaccharide lyase 24 family.

Its function is as follows. Ulvan lyase involved in ulvan degradation. Ulvan is the main polysaccharide component of the Ulvales (green seaweed) cell wall. It is composed of disaccharide building blocks comprising 3-sulfated rhamnose (Rha3S) linked to D-glucuronic acid (GlcA), L-iduronic acid (IduA), or D-xylose (Xyl). Ulvan lyase catalyzes preferentially the endolytic cleavage of the glycosidic bond between Rha3S and the uronic acid GlcA, but not IduA, producing oligosaccharides that have unsaturated 4-deoxy-L-threo-hex-4-enopyranosiduronic acid (deltaUA) at the non-reducing end. The most abundant end products in the degradation of the ulvan polysaccharide were deltaUA-Rha3S disaccharides and deltaUA-Rha3S-IduA-Rha3S and deltaUA-Rha3S-Xyl-Rha3S tetrasaccharides. The chain is Ulvan lyase, long isoform from Pseudoalteromonas sp. (strain PLSV).